The following is a 200-amino-acid chain: Large ribosomal subunit protein uL13 (200 aa).

Belongs to the universal ribosomal protein uL13 family. In terms of assembly, component of the large ribosomal subunit. Mature ribosomes consist of a small (40S) and a large (60S) subunit. The 40S subunit contains about 32 different proteins and 1 molecule of RNA (18S). The 60S subunit contains 45 different proteins and 3 molecules of RNA (25S, 5.8S and 5S).

It is found in the cytoplasm. Component of the ribosome, a large ribonucleoprotein complex responsible for the synthesis of proteins in the cell. The small ribosomal subunit (SSU) binds messenger RNAs (mRNAs) and translates the encoded message by selecting cognate aminoacyl-transfer RNA (tRNA) molecules. The large subunit (LSU) contains the ribosomal catalytic site termed the peptidyl transferase center (PTC), which catalyzes the formation of peptide bonds, thereby polymerizing the amino acids delivered by tRNAs into a polypeptide chain. The nascent polypeptides leave the ribosome through a tunnel in the LSU and interact with protein factors that function in enzymatic processing, targeting, and the membrane insertion of nascent chains at the exit of the ribosomal tunnel. This is Large ribosomal subunit protein uL13 from Candida albicans (strain SC5314 / ATCC MYA-2876) (Yeast).